The sequence spans 212 residues: 3,4-dihydroxy-2-butanone 4-phosphate synthase (212 aa).

D-ribulose 5-phosphate contacts are provided by residues 37-38 (RE), D42, 150-154 (RRGHT), and E174. Position 38 (E38) interacts with Mg(2+). Residue H153 participates in Mg(2+) binding.

Belongs to the DHBP synthase family. Homodimer. Requires Mg(2+) as cofactor. It depends on Mn(2+) as a cofactor.

It carries out the reaction D-ribulose 5-phosphate = (2S)-2-hydroxy-3-oxobutyl phosphate + formate + H(+). Its pathway is cofactor biosynthesis; riboflavin biosynthesis; 2-hydroxy-3-oxobutyl phosphate from D-ribulose 5-phosphate: step 1/1. Catalyzes the conversion of D-ribulose 5-phosphate to formate and 3,4-dihydroxy-2-butanone 4-phosphate. In Shewanella pealeana (strain ATCC 700345 / ANG-SQ1), this protein is 3,4-dihydroxy-2-butanone 4-phosphate synthase.